A 272-amino-acid chain; its full sequence is NH(3)-dependent NAD(+) synthetase (272 aa).

45–52 (GISGGQDS) lines the ATP pocket. Aspartate 51 serves as a coordination point for Mg(2+). Position 138 (arginine 138) interacts with deamido-NAD(+). Threonine 158 serves as a coordination point for ATP. A Mg(2+)-binding site is contributed by glutamate 163. 2 residues coordinate deamido-NAD(+): lysine 171 and aspartate 178. ATP is bound by residues lysine 187 and threonine 209. 258-259 (HK) serves as a coordination point for deamido-NAD(+).

The protein belongs to the NAD synthetase family. In terms of assembly, homodimer.

It catalyses the reaction deamido-NAD(+) + NH4(+) + ATP = AMP + diphosphate + NAD(+) + H(+). The protein operates within cofactor biosynthesis; NAD(+) biosynthesis; NAD(+) from deamido-NAD(+) (ammonia route): step 1/1. In terms of biological role, catalyzes the ATP-dependent amidation of deamido-NAD to form NAD. Uses ammonia as a nitrogen source. The sequence is that of NH(3)-dependent NAD(+) synthetase from Bacillus cereus (strain ATCC 14579 / DSM 31 / CCUG 7414 / JCM 2152 / NBRC 15305 / NCIMB 9373 / NCTC 2599 / NRRL B-3711).